Here is a 58-residue protein sequence, read N- to C-terminus: ATP synthase F(0) complex subunit k, mitochondrial (58 aa).

An N6-acetyllysine mark is found at Lys-16 and Lys-17. Residues 23–45 (TLTGRMNCVLATYGGIALLVLYF) form a helical membrane-spanning segment.

Component of the ATP synthase complex composed at least of ATP5F1A/subunit alpha, ATP5F1B/subunit beta, ATP5MC1/subunit c (homooctomer), MT-ATP6/subunit a, MT-ATP8/subunit 8, ATP5ME/subunit e, ATP5MF/subunit f, ATP5MG/subunit g, ATP5MK/subunit k, ATP5MJ/subunit j, ATP5F1C/subunit gamma, ATP5F1D/subunit delta, ATP5F1E/subunit epsilon, ATP5PF/subunit F6, ATP5PB/subunit b, ATP5PD/subunit d, ATP5PO/subunit OSCP. ATP synthase complex consists of a soluble F(1) head domain (subunits alpha(3) and beta(3)) - the catalytic core - and a membrane F(0) domain - the membrane proton channel (subunits c, a, 8, e, f, g, k and j). These two domains are linked by a central stalk (subunits gamma, delta, and epsilon) rotating inside the F1 region and a stationary peripheral stalk (subunits F6, b, d, and OSCP). The ATP synthase complex/complex V exists as a monomeric and a dimeric supercomplex that helps shape mitochondrial cristae to optimize proton flow.

The protein resides in the mitochondrion membrane. Functionally, subunit k, of the mitochondrial membrane ATP synthase complex (F(1)F(0) ATP synthase or Complex V) that produces ATP from ADP in the presence of a proton gradient across the membrane which is generated by electron transport complexes of the respiratory chain. ATP synthase complex consist of a soluble F(1) head domain - the catalytic core - and a membrane F(1) domain - the membrane proton channel. These two domains are linked by a central stalk rotating inside the F(1) region and a stationary peripheral stalk. During catalysis, ATP synthesis in the catalytic domain of F(1) is coupled via a rotary mechanism of the central stalk subunits to proton translocation. In vivo, can only synthesize ATP although its ATP hydrolase activity can be activated artificially in vitro. Part of the complex F(0) domain. Required for dimerization of the ATP synthase complex and as such regulates ATP synthesis in the mitochondria. In Mus musculus (Mouse), this protein is ATP synthase F(0) complex subunit k, mitochondrial.